Here is an 85-residue protein sequence, read N- to C-terminus: MVKLRLKRCGRKQQAIYRIVAIDVRSRREGRDLRKVGFYDPIKNQTCLNVPAILYFLEKGAQPTRTVYDILRKAEFFKDKERTLS.

The protein belongs to the bacterial ribosomal protein bS16 family.

The protein localises to the plastid. Its subcellular location is the chloroplast. This chain is Small ribosomal subunit protein bS16c, found in Saccharum hybrid (Sugarcane).